We begin with the raw amino-acid sequence, 161 residues long: MNRQLRFAVAGPEILAAVVSGCSSGNKSAPSSSASSSSTSPSASSGGAAGTKVIIDGKDQNVSGSVVCTNAGGTVNIAIGGAATGIAAVLSDGNPPQVKSVGLGNVNGVTLGYTSGTGQGNASAEKNGNSYKITGTATGVDMANPLQPVNKPFEIDVTCNS.

The first 21 residues, 1–21 (MNRQLRFAVAGPEILAAVVSG), serve as a signal peptide directing secretion. Positions 21-46 (GCSSGNKSAPSSSASSSSTSPSASSG) are enriched in low complexity. The interval 21-49 (GCSSGNKSAPSSSASSSSTSPSASSGGAA) is disordered. A lipid anchor (N-palmitoyl cysteine) is attached at cysteine 22. Residue cysteine 22 is the site of S-diacylglycerol cysteine attachment.

This sequence belongs to the mycobacterial 19 kDa antigen family. In terms of processing, modified by Lgt on Cys-22 with an S-linked diacylglycerol with a mixture of C16, C18 and C19 fatty acids, signal peptide is removed by LspA, modifed by Lnt with an amide-linked mixture of C16 and C19 fatty acids.

The protein localises to the cell membrane. Functionally, might be involved in ligand transport. A host TLR2 agonist, modifies host gene expression in response to pathogen. This is Lipoprotein LpqH (lpqH) from Mycobacterium avium.